We begin with the raw amino-acid sequence, 515 residues long: Galactokinase (515 aa).

Alpha-D-galactose is bound by residues Arg48, Asp54, His55, and Asp57. ATP-binding residues include Gly155, Gly157, Ser159, and Ser160. Asp205 contributes to the alpha-D-galactose binding site. Asp205 acts as the Proton acceptor in catalysis. Residues Ser249, Asn250, and Lys251 each contribute to the ATP site. Tyr259 contacts alpha-D-galactose.

It belongs to the GHMP kinase family. GalK subfamily.

It carries out the reaction alpha-D-galactose + ATP = alpha-D-galactose 1-phosphate + ADP + H(+). Its pathway is carbohydrate metabolism; galactose metabolism. Its function is as follows. Galactokinase is a key enzyme in the galactose metabolism where it catalyzes the conversion of alpha-D-galactose to galactose 1-phosphate. Can also induce the transcription of the gal genes in response to the organism being challenged with galactose as the sole source of carbon. The sequence is that of Galactokinase from Candida albicans (Yeast).